A 191-amino-acid polypeptide reads, in one-letter code: NAD(P)H-quinone oxidoreductase subunit L, chloroplastic (191 aa).

The N-terminal 46 residues, methionine 1–asparagine 46, are a transit peptide targeting the chloroplast. Helical transmembrane passes span threonine 61–isoleucine 81, valine 93–methionine 113, and tyrosine 129–leucine 149.

Belongs to the NDH complex subunit L family. Part of the chloroplast NDH complex, composed of a mixture of chloroplast and nucleus encoded subunits. Component of the NDH subcomplex A, at least composed of ndhH, ndhI, ndhJ, ndhK, ndhL, ndhM, ndhN and ndhO.

The protein localises to the plastid. Its subcellular location is the chloroplast thylakoid membrane. It catalyses the reaction a plastoquinone + NADH + (n+1) H(+)(in) = a plastoquinol + NAD(+) + n H(+)(out). It carries out the reaction a plastoquinone + NADPH + (n+1) H(+)(in) = a plastoquinol + NADP(+) + n H(+)(out). Functionally, NDH shuttles electrons from NAD(P)H:plastoquinone, via FMN and iron-sulfur (Fe-S) centers, to quinones in the photosynthetic chain and possibly in a chloroplast respiratory chain. The immediate electron acceptor for the enzyme in this species is believed to be plastoquinone. Couples the redox reaction to proton translocation, and thus conserves the redox energy in a proton gradient. This Arabidopsis thaliana (Mouse-ear cress) protein is NAD(P)H-quinone oxidoreductase subunit L, chloroplastic.